Consider the following 98-residue polypeptide: NADH-ubiquinone oxidoreductase chain 4L (98 aa).

3 helical membrane-spanning segments follow: residues 1–21, 28–48, and 61–81; these read MEQI…GVLT, STLL…VLLI, and LILL…LVTI.

The protein belongs to the complex I subunit 4L family. In terms of assembly, core subunit of respiratory chain NADH dehydrogenase (Complex I) which is composed of 45 different subunits.

Its subcellular location is the mitochondrion inner membrane. The catalysed reaction is a ubiquinone + NADH + 5 H(+)(in) = a ubiquinol + NAD(+) + 4 H(+)(out). In terms of biological role, core subunit of the mitochondrial membrane respiratory chain NADH dehydrogenase (Complex I) which catalyzes electron transfer from NADH through the respiratory chain, using ubiquinone as an electron acceptor. Part of the enzyme membrane arm which is embedded in the lipid bilayer and involved in proton translocation. In Monodelphis domestica (Gray short-tailed opossum), this protein is NADH-ubiquinone oxidoreductase chain 4L (MT-ND4L).